Consider the following 198-residue polypeptide: MADTQCCPPPCEFISSAGTDLALGMGWDATLCLLPFTGFGKCAGIWNHMDEEPDNGDDRGSRRTTGQGRKWAAHGTMAAPRVHTDYHPGGGSACSSVKVRSHVGHTGVFFFVDQDPLAVSLTSQSLIPPLIKPGLLKAWGFLLLCAQPSANGHSLCCLLYTDLVSSHELSPFRALCLGPSDAPSACASCNCLASTYYL.

The interval 51–74 is disordered; that stretch reads EEPDNGDDRGSRRTTGQGRKWAAH.

This is an uncharacterized protein from Homo sapiens (Human).